A 442-amino-acid polypeptide reads, in one-letter code: Cell division protein FtsZ (442 aa).

Residues Gly18 to Asn22, Gly105 to Gly107, Glu136, Arg140, and Asp184 each bind GTP. A compositionally biased stretch (low complexity) spans Ala329 to Pro341. The interval Ala329–Gln442 is disordered. Composition is skewed to basic and acidic residues over residues Pro349 to Asn362 and Asn390 to Arg431.

It belongs to the FtsZ family. In terms of assembly, homodimer. Polymerizes to form a dynamic ring structure in a strictly GTP-dependent manner. Interacts directly with several other division proteins.

The protein localises to the cytoplasm. In terms of biological role, essential cell division protein that forms a contractile ring structure (Z ring) at the future cell division site. The regulation of the ring assembly controls the timing and the location of cell division. One of the functions of the FtsZ ring is to recruit other cell division proteins to the septum to produce a new cell wall between the dividing cells. Binds GTP and shows GTPase activity. This Corynebacterium glutamicum (strain ATCC 13032 / DSM 20300 / JCM 1318 / BCRC 11384 / CCUG 27702 / LMG 3730 / NBRC 12168 / NCIMB 10025 / NRRL B-2784 / 534) protein is Cell division protein FtsZ.